The primary structure comprises 169 residues: N-alpha-acetyltransferase 50 (169 aa).

Positions 5–154 (IELGDVTPHN…DAHVLQKNLK (150 aa)) constitute an N-acetyltransferase domain. Tyr30 contributes to the substrate binding site. Residue Tyr72 is part of the active site. Met74 serves as a coordination point for substrate. 76-89 (LGCLAPYRRLGIGT) is a binding site for acetyl-CoA. Residue 78 to 89 (CLAPYRRLGIGT) coordinates CoA. Residue His111 is part of the active site. 116-125 (NESAIDFYRK) is a CoA binding site. A substrate region spans residues 137 to 140 (YYKR).

It belongs to the acetyltransferase family. GNAT subfamily.

The protein localises to the cytoplasm. The protein resides in the nucleus. It catalyses the reaction N-terminal L-methionyl-L-alanyl-[protein] + acetyl-CoA = N-terminal N(alpha)-acetyl-L-methionyl-L-alanyl-[protein] + CoA + H(+). The catalysed reaction is N-terminal L-methionyl-L-seryl-[protein] + acetyl-CoA = N-terminal N(alpha)-acetyl-L-methionyl-L-seryl-[protein] + CoA + H(+). The enzyme catalyses N-terminal L-methionyl-L-valyl-[protein] + acetyl-CoA = N-terminal N(alpha)-acetyl-L-methionyl-L-valyl-[protein] + CoA + H(+). It carries out the reaction N-terminal L-methionyl-L-threonyl-[protein] + acetyl-CoA = N-terminal N(alpha)-acetyl-L-methionyl-L-threonyl-[protein] + CoA + H(+). It catalyses the reaction N-terminal L-methionyl-L-lysyl-[protein] + acetyl-CoA = N-terminal N(alpha)-acetyl-L-methionyl-L-lysyl-[protein] + CoA + H(+). The catalysed reaction is N-terminal L-methionyl-L-leucyl-[protein] + acetyl-CoA = N-terminal N(alpha)-acetyl-L-methionyl-L-leucyl-[protein] + CoA + H(+). The enzyme catalyses N-terminal L-methionyl-L-phenylalanyl-[protein] + acetyl-CoA = N-terminal N(alpha)-acetyl-L-methionyl-L-phenylalanyl-[protein] + CoA + H(+). It carries out the reaction N-terminal L-methionyl-L-tyrosyl-[protein] + acetyl-CoA = N-terminal N(alpha)-acetyl-L-methionyl-L-tyrosyl-[protein] + CoA + H(+). Its function is as follows. N-alpha-acetyltransferase that acetylates the N-terminus of proteins that retain their initiating methionine. Has a broad substrate specificity: able to acetylate the initiator methionine of most peptides, except for those with a proline in second position. Also displays N-epsilon-acetyltransferase activity by mediating acetylation of the side chain of specific lysines on proteins. The relevance of N-epsilon-acetyltransferase activity is however unclear. Required for sister chromatid cohesion during mitosis by promoting binding of CDCA5/sororin to cohesin. The chain is N-alpha-acetyltransferase 50 (naa50) from Xenopus tropicalis (Western clawed frog).